The sequence spans 491 residues: Sucrose transport protein SUC9 (491 aa).

Positions 1-12 are enriched in basic and acidic residues; it reads MSDIQAKEDAAP. Residues 1–26 form a disordered region; that stretch reads MSDIQAKEDAAPVDRQSSSSVVVPDE. Residues 1–33 lie on the Cytoplasmic side of the membrane; it reads MSDIQAKEDAAPVDRQSSSSVVVPDEPSPLRKM. Ser17 is subject to Phosphoserine. Residues 34–54 form a helical membrane-spanning segment; it reads ISVASIAAGIQFGWALQLSLL. Topologically, residues 55-68 are extracellular; sequence TPYVQLLGVPHKWS. A helical transmembrane segment spans residues 69 to 89; it reads SFIWLCGPISGLLVQPTVGYF. At 90-101 the chain is on the cytoplasmic side; it reads SDRCKSRFGRRR. The helical transmembrane segment at 102-122 threads the bilayer; that stretch reads PFIATGALLVALAVILIGFAA. Topologically, residues 123 to 139 are extracellular; it reads DFGHTMGDKLDEAVKIR. A helical membrane pass occupies residues 140-160; the sequence is AVGFFVVGFWILDVANNTLQG. Residues 161-181 lie on the Cytoplasmic side of the membrane; sequence PCRAFLGDLAAGDAKKTRTAN. Residues 182 to 202 traverse the membrane as a helical segment; sequence AIFSFFMAVGNVLGYAAGSYT. The Extracellular segment spans residues 203–224; that stretch reads NLHKIFPFTVTKACDIYCANLK. A helical transmembrane segment spans residues 225-245; that stretch reads SCFIISITLLIVLTIIALWYV. Residues 246-277 lie on the Cytoplasmic side of the membrane; sequence EDKQWSPNADSDNEKTPFFGEIFGAFKVMKRP. A helical membrane pass occupies residues 278-298; the sequence is MWMLLAVTALNWIAWFPFLLY. Topologically, residues 299-329 are extracellular; the sequence is DTDWMGREVYGGDSAGDDKMKKLYNHGIQVG. Residues 330–350 form a helical membrane-spanning segment; the sequence is SLGLMLNSIVLGVMSLVIGVI. Residues 351 to 358 are Cytoplasmic-facing; the sequence is SKKIGAKR. A helical transmembrane segment spans residues 359 to 379; the sequence is LWGAVNIILAVCLAMTVLVTK. Over 380–406 the chain is Extracellular; the sequence is KAEEHRKIAGRMALPTNAIRDGALSLF. Residues 407 to 427 form a helical membrane-spanning segment; sequence AILGIPLAITFSIPFALASII. At 428-443 the chain is on the cytoplasmic side; that stretch reads SSSSGAGQGLSLGVLN. Residues 444–464 form a helical membrane-spanning segment; that stretch reads MAIVIPQMIVSFGVGPIDALF. Residues 465–468 are Extracellular-facing; the sequence is GGGN. A helical transmembrane segment spans residues 469–489; the sequence is LPGFVVGAIAALISSVVALTV. Residues 490 to 491 are Cytoplasmic-facing; it reads LP.

It belongs to the glycoside-pentoside-hexuronide (GPH) cation symporter transporter (TC 2.A.2.4) family. As to expression, widely expressed.

The protein resides in the cell membrane. It catalyses the reaction sucrose(out) + H(+)(out) = sucrose(in) + H(+)(in). Its pathway is glycan biosynthesis; sucrose metabolism. With respect to regulation, inhibited by protonophores (e.g. carbonyl cyanide m-chlorophenyl-hydrazone (CCCP)) and SH group inhibitors (e.g. p-chloromercuribenzene sulphonic acid (PCMBS)). High-affinity sucrose transporter. Responsible for the transport of sucrose into the cell, with the concomitant uptake of protons (symport system). Can also transport a wide range of glucosides, such as helicin, salicin, arbutin, maltose, fraxin, esculin, uranose, alpha-methylglucoside, alpha-phenylglucoside and beta-phenylglucoside. Plays a role in flowering time transition delay. The chain is Sucrose transport protein SUC9 from Arabidopsis thaliana (Mouse-ear cress).